The primary structure comprises 104 residues: Large ribosomal subunit protein bL21 (104 aa).

The protein belongs to the bacterial ribosomal protein bL21 family. As to quaternary structure, part of the 50S ribosomal subunit. Contacts protein L20.

This protein binds to 23S rRNA in the presence of protein L20. The protein is Large ribosomal subunit protein bL21 of Azobacteroides pseudotrichonymphae genomovar. CFP2.